Reading from the N-terminus, the 430-residue chain is Histidine--tRNA ligase (430 aa).

This sequence belongs to the class-II aminoacyl-tRNA synthetase family. As to quaternary structure, homodimer.

It localises to the cytoplasm. The enzyme catalyses tRNA(His) + L-histidine + ATP = L-histidyl-tRNA(His) + AMP + diphosphate + H(+). The chain is Histidine--tRNA ligase (hisS) from Chlamydia pneumoniae (Chlamydophila pneumoniae).